We begin with the raw amino-acid sequence, 472 residues long: MNMPQSLGTQPLPPEPPSLGTPIEGSGAIAPTEHCWPVRPTLRNELDTFSVHFYIFFGPSVALPPERPAVFALRLLPVLDSGGVLSLELQLNASSLRQENVTVFGCLTHEVPLSLGDAAVTCSKESLAGFLLSVSATSRVARLRIPFPQTGTWFLTLRSLCGVGPRFVRCRNATAEVRLRTFLSPCVDDCGPYGQCKLLRTHNYLYAACECKAGWRGWGCTDSADALTYGFQLLSTLLLCLSNLMFLPPVVLAIRSRYVLEAAVYTFTMFFSTFYHACDQPGIVVFCIMDYDVLQFCDFLGSLMSVWVTVIAMARLQPVIKQVLYLLGAMLLSMALQLDRHGLWNLLGPSLFALGILATAWTVRSVRRRHCYPPTWRRWLFYLCPGSLIAGSAVLLYAFVETRDNYFYIHSIWHMLIAGSVGFLLPPRAKTDRRVPSGARARGCGYQLCINEQEELGLVGPGGTTVSSICVS.

Low complexity predominate over residues 1-10; it reads MNMPQSLGTQ. The interval 1 to 24 is disordered; sequence MNMPQSLGTQPLPPEPPSLGTPIE. Topologically, residues 1–233 are extracellular; the sequence is MNMPQSLGTQ…ADALTYGFQL (233 aa). N-linked (GlcNAc...) asparagine glycosylation occurs at asparagine 100. Residues 182–221 enclose the EGF-like domain; that stretch reads FLSPCVDDCGPYGQCKLLRTHNYLYAACECKAGWRGWGCT. Cystine bridges form between cysteine 186/cysteine 196, cysteine 190/cysteine 209, and cysteine 211/cysteine 220. The chain crosses the membrane as a helical span at residues 234-254; that stretch reads LSTLLLCLSNLMFLPPVVLAI. Residues 255–257 are Cytoplasmic-facing; that stretch reads RSR. Residues 258-277 form a helical membrane-spanning segment; that stretch reads YVLEAAVYTFTMFFSTFYHA. At 278 to 292 the chain is on the extracellular side; sequence CDQPGIVVFCIMDYD. Residues 293-313 traverse the membrane as a helical segment; sequence VLQFCDFLGSLMSVWVTVIAM. Topologically, residues 314–315 are cytoplasmic; it reads AR. Residues 316-336 form a helical membrane-spanning segment; that stretch reads LQPVIKQVLYLLGAMLLSMAL. Over 337 to 342 the chain is Extracellular; it reads QLDRHG. A helical membrane pass occupies residues 343–363; the sequence is LWNLLGPSLFALGILATAWTV. The Cytoplasmic segment spans residues 364–379; that stretch reads RSVRRRHCYPPTWRRW. Residues 380–400 traverse the membrane as a helical segment; the sequence is LFYLCPGSLIAGSAVLLYAFV. The Extracellular portion of the chain corresponds to 401 to 405; it reads ETRDN. The helical transmembrane segment at 406-426 threads the bilayer; that stretch reads YFYIHSIWHMLIAGSVGFLLP. Residues 427–472 lie on the Cytoplasmic side of the membrane; that stretch reads PRAKTDRRVPSGARARGCGYQLCINEQEELGLVGPGGTTVSSICVS.

It belongs to the TMEM8 family. As to quaternary structure, may interact with EZR. Post-translationally, N-glycosylated.

The protein localises to the cell membrane. The protein resides in the cytoplasm. Its subcellular location is the nucleus. It localises to the mitochondrion. It is found in the endoplasmic reticulum. Functionally, may function as a regulator of the EGFR pathway. Probable tumor suppressor which may function in cell growth, proliferation and adhesion. This chain is Transmembrane protein 8B (Tmem8b), found in Mus musculus (Mouse).